The following is a 200-amino-acid chain: Small ribosomal subunit protein uS4 (200 aa).

The segment at 22-43 (TGKELERRPYAPGQHGPTQRKK) is disordered. The 79-residue stretch at 92–170 (QRLDNIVYRL…VPEYVTFDAE (79 aa)) folds into the S4 RNA-binding domain.

This sequence belongs to the universal ribosomal protein uS4 family. In terms of assembly, part of the 30S ribosomal subunit. Contacts protein S5. The interaction surface between S4 and S5 is involved in control of translational fidelity.

Its function is as follows. One of the primary rRNA binding proteins, it binds directly to 16S rRNA where it nucleates assembly of the body of the 30S subunit. With S5 and S12 plays an important role in translational accuracy. The polypeptide is Small ribosomal subunit protein uS4 (Listeria monocytogenes serotype 4a (strain HCC23)).